The following is a 263-amino-acid chain: Diphthine synthase (263 aa).

Residues leucine 9, aspartate 84, methionine 87, 112-113 (SI), leucine 164, alanine 207, and histidine 232 contribute to the S-adenosyl-L-methionine site.

This sequence belongs to the diphthine synthase family. In terms of assembly, homodimer.

It carries out the reaction 2-[(3S)-amino-3-carboxypropyl]-L-histidyl-[translation elongation factor 2] + 3 S-adenosyl-L-methionine = diphthine-[translation elongation factor 2] + 3 S-adenosyl-L-homocysteine + 3 H(+). Its pathway is protein modification; peptidyl-diphthamide biosynthesis. Its function is as follows. S-adenosyl-L-methionine-dependent methyltransferase that catalyzes the trimethylation of the amino group of the modified target histidine residue in translation elongation factor 2 (EF-2), to form an intermediate called diphthine. The three successive methylation reactions represent the second step of diphthamide biosynthesis. The polypeptide is Diphthine synthase (Methanosphaera stadtmanae (strain ATCC 43021 / DSM 3091 / JCM 11832 / MCB-3)).